Consider the following 116-residue polypeptide: NADH-ubiquinone oxidoreductase chain 3 (116 aa).

Helical transmembrane passes span L3–F23, F56–L76, and P85–Y105.

Belongs to the complex I subunit 3 family.

The protein resides in the mitochondrion membrane. The enzyme catalyses a ubiquinone + NADH + 5 H(+)(in) = a ubiquinol + NAD(+) + 4 H(+)(out). Core subunit of the mitochondrial membrane respiratory chain NADH dehydrogenase (Complex I) that is believed to belong to the minimal assembly required for catalysis. Complex I functions in the transfer of electrons from NADH to the respiratory chain. The immediate electron acceptor for the enzyme is believed to be ubiquinone. The polypeptide is NADH-ubiquinone oxidoreductase chain 3 (MT-ND3) (Salmo salar (Atlantic salmon)).